We begin with the raw amino-acid sequence, 378 residues long: Succinyl-diaminopimelate desuccinylase 2 (378 aa).

His68 is a binding site for Zn(2+). Asp70 is an active-site residue. Zn(2+) is bound at residue Asp101. Glu135 (proton acceptor) is an active-site residue. Positions 136, 164, and 350 each coordinate Zn(2+).

This sequence belongs to the peptidase M20A family. DapE subfamily. As to quaternary structure, homodimer. Zn(2+) serves as cofactor. Co(2+) is required as a cofactor.

It carries out the reaction N-succinyl-(2S,6S)-2,6-diaminopimelate + H2O = (2S,6S)-2,6-diaminopimelate + succinate. It participates in amino-acid biosynthesis; L-lysine biosynthesis via DAP pathway; LL-2,6-diaminopimelate from (S)-tetrahydrodipicolinate (succinylase route): step 3/3. Catalyzes the hydrolysis of N-succinyl-L,L-diaminopimelic acid (SDAP), forming succinate and LL-2,6-diaminopimelate (DAP), an intermediate involved in the bacterial biosynthesis of lysine and meso-diaminopimelic acid, an essential component of bacterial cell walls. This is Succinyl-diaminopimelate desuccinylase 2 from Alteromonas mediterranea (strain DSM 17117 / CIP 110805 / LMG 28347 / Deep ecotype).